The primary structure comprises 279 residues: Proteasome subunit beta (279 aa).

Positions 1–53 are cleaved as a propeptide — removed in mature form; by autocatalysis; that stretch reads MAAAFDPSGRLPDLFTSAGTSSFSAFLSMAAPELLPGRRPLPPGTAADLTPHA. Threonine 54 (nucleophile) is an active-site residue.

Belongs to the peptidase T1B family. As to quaternary structure, the 20S proteasome core is composed of 14 alpha and 14 beta subunits that assemble into four stacked heptameric rings, resulting in a barrel-shaped structure. The two inner rings, each composed of seven catalytic beta subunits, are sandwiched by two outer rings, each composed of seven alpha subunits. The catalytic chamber with the active sites is on the inside of the barrel. Has a gated structure, the ends of the cylinder being occluded by the N-termini of the alpha-subunits. Is capped by the proteasome-associated ATPase, ARC.

It localises to the cytoplasm. The enzyme catalyses Cleavage of peptide bonds with very broad specificity.. The protein operates within protein degradation; proteasomal Pup-dependent pathway. The formation of the proteasomal ATPase ARC-20S proteasome complex, likely via the docking of the C-termini of ARC into the intersubunit pockets in the alpha-rings, may trigger opening of the gate for substrate entry. Interconversion between the open-gate and close-gate conformations leads to a dynamic regulation of the 20S proteasome proteolysis activity. Functionally, component of the proteasome core, a large protease complex with broad specificity involved in protein degradation. The chain is Proteasome subunit beta from Salinispora arenicola (strain CNS-205).